A 618-amino-acid polypeptide reads, in one-letter code: 1-deoxy-D-xylulose-5-phosphate synthase (618 aa).

Residues His-72 and 113–115 (GHA) contribute to the thiamine diphosphate site. Residue Asp-144 coordinates Mg(2+). Residues 145–146 (GA), Asn-173, His-284, and Glu-359 contribute to the thiamine diphosphate site. Asn-173 provides a ligand contact to Mg(2+).

Belongs to the transketolase family. DXPS subfamily. As to quaternary structure, homodimer. Requires Mg(2+) as cofactor. Thiamine diphosphate is required as a cofactor.

The catalysed reaction is D-glyceraldehyde 3-phosphate + pyruvate + H(+) = 1-deoxy-D-xylulose 5-phosphate + CO2. It participates in metabolic intermediate biosynthesis; 1-deoxy-D-xylulose 5-phosphate biosynthesis; 1-deoxy-D-xylulose 5-phosphate from D-glyceraldehyde 3-phosphate and pyruvate: step 1/1. Its function is as follows. Catalyzes the acyloin condensation reaction between C atoms 2 and 3 of pyruvate and glyceraldehyde 3-phosphate to yield 1-deoxy-D-xylulose-5-phosphate (DXP). The sequence is that of 1-deoxy-D-xylulose-5-phosphate synthase from Dictyoglomus turgidum (strain DSM 6724 / Z-1310).